We begin with the raw amino-acid sequence, 473 residues long: Bifunctional protein HldE (473 aa).

The tract at residues 1–318 (MKLSMPRFDQ…RAVQREEGSE (318 aa)) is ribokinase. An ATP-binding site is contributed by 194 to 197 (NLGE). The active site involves aspartate 263. Residues 343-473 (FTNGCFDILH…TAIVEKIRKA (131 aa)) form a cytidylyltransferase region.

The protein in the N-terminal section; belongs to the carbohydrate kinase PfkB family. This sequence in the C-terminal section; belongs to the cytidylyltransferase family. As to quaternary structure, homodimer.

The enzyme catalyses D-glycero-beta-D-manno-heptose 7-phosphate + ATP = D-glycero-beta-D-manno-heptose 1,7-bisphosphate + ADP + H(+). It catalyses the reaction D-glycero-beta-D-manno-heptose 1-phosphate + ATP + H(+) = ADP-D-glycero-beta-D-manno-heptose + diphosphate. It participates in nucleotide-sugar biosynthesis; ADP-L-glycero-beta-D-manno-heptose biosynthesis; ADP-L-glycero-beta-D-manno-heptose from D-glycero-beta-D-manno-heptose 7-phosphate: step 1/4. The protein operates within nucleotide-sugar biosynthesis; ADP-L-glycero-beta-D-manno-heptose biosynthesis; ADP-L-glycero-beta-D-manno-heptose from D-glycero-beta-D-manno-heptose 7-phosphate: step 3/4. Catalyzes the phosphorylation of D-glycero-D-manno-heptose 7-phosphate at the C-1 position to selectively form D-glycero-beta-D-manno-heptose-1,7-bisphosphate. In terms of biological role, catalyzes the ADP transfer from ATP to D-glycero-beta-D-manno-heptose 1-phosphate, yielding ADP-D-glycero-beta-D-manno-heptose. The sequence is that of Bifunctional protein HldE from Stutzerimonas stutzeri (strain A1501) (Pseudomonas stutzeri).